The primary structure comprises 183 residues: Glutathione-regulated potassium-efflux system ancillary protein KefG (183 aa).

This sequence belongs to the NAD(P)H dehydrogenase (quinone) family. KefG subfamily. As to quaternary structure, interacts with KefB.

The protein localises to the cell inner membrane. It catalyses the reaction a quinone + NADH + H(+) = a quinol + NAD(+). The catalysed reaction is a quinone + NADPH + H(+) = a quinol + NADP(+). In terms of biological role, regulatory subunit of a potassium efflux system that confers protection against electrophiles. Required for full activity of KefB. The protein is Glutathione-regulated potassium-efflux system ancillary protein KefG of Salmonella paratyphi C (strain RKS4594).